Consider the following 397-residue polypeptide: Serpin-Z7 (397 aa).

The residue at position 2 (A2) is an N-acetylalanine. Positions 344 to 368 (GTKAGAATGDVIVDRSLPIRMDFVA) are RCL.

It belongs to the serpin family. Highly expressed in endosperm, at intermediate level in embryo and at lower levels in roots.

Functionally, inhibits chymotrypsin in vitro. This is Serpin-Z7 (PAZ7) from Hordeum vulgare (Barley).